The sequence spans 722 residues: Probable acyl-activating enzyme 16, chloroplastic (722 aa).

Residues 1 to 47 constitute a chloroplast transit peptide; the sequence is MASTSLGASILVSHCSSAPEFQVSGMRLVFGYKAFGCRTSRRGFRVR.

This sequence belongs to the ATP-dependent AMP-binding enzyme family.

It localises to the plastid. The protein resides in the chloroplast. In terms of biological role, may be involved in the activation of fatty acids to acyl-carrier-protein. The polypeptide is Probable acyl-activating enzyme 16, chloroplastic (AAE16) (Arabidopsis thaliana (Mouse-ear cress)).